The following is a 226-amino-acid chain: 2-C-methyl-D-erythritol 4-phosphate cytidylyltransferase (226 aa).

This sequence belongs to the IspD/TarI cytidylyltransferase family. IspD subfamily.

The enzyme catalyses 2-C-methyl-D-erythritol 4-phosphate + CTP + H(+) = 4-CDP-2-C-methyl-D-erythritol + diphosphate. It participates in isoprenoid biosynthesis; isopentenyl diphosphate biosynthesis via DXP pathway; isopentenyl diphosphate from 1-deoxy-D-xylulose 5-phosphate: step 2/6. Functionally, catalyzes the formation of 4-diphosphocytidyl-2-C-methyl-D-erythritol from CTP and 2-C-methyl-D-erythritol 4-phosphate (MEP). The sequence is that of 2-C-methyl-D-erythritol 4-phosphate cytidylyltransferase from Clostridium beijerinckii (strain ATCC 51743 / NCIMB 8052) (Clostridium acetobutylicum).